The following is a 192-amino-acid chain: Large ribosomal subunit protein uL5 (192 aa).

Belongs to the universal ribosomal protein uL5 family. In terms of assembly, part of the 50S ribosomal subunit; part of the 5S rRNA/L5/L18/L25 subcomplex. Contacts the 5S rRNA and the P site tRNA. Forms a bridge to the 30S subunit in the 70S ribosome.

This is one of the proteins that bind and probably mediate the attachment of the 5S RNA into the large ribosomal subunit, where it forms part of the central protuberance. In the 70S ribosome it contacts protein S13 of the 30S subunit (bridge B1b), connecting the 2 subunits; this bridge is implicated in subunit movement. Contacts the P site tRNA; the 5S rRNA and some of its associated proteins might help stabilize positioning of ribosome-bound tRNAs. The polypeptide is Large ribosomal subunit protein uL5 (Zymomonas mobilis subsp. mobilis (strain ATCC 31821 / ZM4 / CP4)).